The chain runs to 230 residues: Uracil-DNA glycosylase (230 aa).

Catalysis depends on D71, which acts as the Proton acceptor.

Belongs to the uracil-DNA glycosylase (UDG) superfamily. UNG family.

It localises to the cytoplasm. The catalysed reaction is Hydrolyzes single-stranded DNA or mismatched double-stranded DNA and polynucleotides, releasing free uracil.. Functionally, excises uracil residues from the DNA which can arise as a result of misincorporation of dUMP residues by DNA polymerase or due to deamination of cytosine. The sequence is that of Uracil-DNA glycosylase from Nocardioides sp. (strain ATCC BAA-499 / JS614).